The primary structure comprises 501 residues: L-arabinose isomerase (501 aa).

Mn(2+) is bound by residues glutamate 306, glutamate 333, histidine 350, and histidine 450.

It belongs to the arabinose isomerase family. In terms of assembly, homohexamer. It depends on Mn(2+) as a cofactor.

It carries out the reaction beta-L-arabinopyranose = L-ribulose. It participates in carbohydrate degradation; L-arabinose degradation via L-ribulose; D-xylulose 5-phosphate from L-arabinose (bacterial route): step 1/3. Catalyzes the conversion of L-arabinose to L-ribulose. The polypeptide is L-arabinose isomerase (Serratia proteamaculans (strain 568)).